Here is a 381-residue protein sequence, read N- to C-terminus: 4-hydroxy-3-methylbut-2-en-1-yl diphosphate synthase (flavodoxin) (381 aa).

Residues Cys273, Cys276, Cys308, and Glu315 each coordinate [4Fe-4S] cluster.

The protein belongs to the IspG family. The cofactor is [4Fe-4S] cluster.

The enzyme catalyses (2E)-4-hydroxy-3-methylbut-2-enyl diphosphate + oxidized [flavodoxin] + H2O + 2 H(+) = 2-C-methyl-D-erythritol 2,4-cyclic diphosphate + reduced [flavodoxin]. Its pathway is isoprenoid biosynthesis; isopentenyl diphosphate biosynthesis via DXP pathway; isopentenyl diphosphate from 1-deoxy-D-xylulose 5-phosphate: step 5/6. Its function is as follows. Converts 2C-methyl-D-erythritol 2,4-cyclodiphosphate (ME-2,4cPP) into 1-hydroxy-2-methyl-2-(E)-butenyl 4-diphosphate. The chain is 4-hydroxy-3-methylbut-2-en-1-yl diphosphate synthase (flavodoxin) from Gluconobacter oxydans (strain 621H) (Gluconobacter suboxydans).